The sequence spans 215 residues: Small ribosomal subunit protein uS5 (215 aa).

Positions 1–12 (MSGTQRRGGGAG) are enriched in gly residues. Positions 1-31 (MSGTQRRGGGAGGERRGRDNRRGQNDRNRNQ) are disordered. Residues 13-31 (GERRGRDNRRGQNDRNRNQ) are compositionally biased toward basic and acidic residues. In terms of domain architecture, S5 DRBM spans 34–97 (YLERVVAINR…EEAKKHFFKV (64 aa)).

Belongs to the universal ribosomal protein uS5 family. As to quaternary structure, part of the 30S ribosomal subunit. Contacts proteins S4 and S8.

In terms of biological role, with S4 and S12 plays an important role in translational accuracy. Functionally, located at the back of the 30S subunit body where it stabilizes the conformation of the head with respect to the body. The sequence is that of Small ribosomal subunit protein uS5 from Cutibacterium acnes (strain DSM 16379 / KPA171202) (Propionibacterium acnes).